The sequence spans 179 residues: Large ribosomal subunit protein uL6 (179 aa).

It belongs to the universal ribosomal protein uL6 family. In terms of assembly, part of the 50S ribosomal subunit.

This protein binds to the 23S rRNA, and is important in its secondary structure. It is located near the subunit interface in the base of the L7/L12 stalk, and near the tRNA binding site of the peptidyltransferase center. The polypeptide is Large ribosomal subunit protein uL6 (Prochlorococcus marinus (strain MIT 9515)).